The primary structure comprises 268 residues: uncharacterized protein (268 aa).

This is an uncharacterized protein from Schizosaccharomyces pombe (strain 972 / ATCC 24843) (Fission yeast).